The following is a 145-amino-acid chain: Protein FAM216B (145 aa).

The tract at residues 92 to 121 (TKRASAKAGPHRTVPQRAAGRTRTQPSARP) is disordered.

This sequence belongs to the FAM216 family.

The sequence is that of Protein FAM216B (FAM216B) from Bos taurus (Bovine).